The following is a 654-amino-acid chain: tRNA 5-methylaminomethyl-2-thiouridine biosynthesis bifunctional protein MnmC (654 aa).

The tract at residues 1–236 is tRNA (mnm(5)s(2)U34)-methyltransferase; it reads MSTLLQHAQI…KWEVMSGAYV (236 aa). The segment at 262 to 654 is FAD-dependent cmnm(5)s(2)U34 oxidoreductase; sequence IGAGLAGSTT…FALRRLIRGK (393 aa).

In the N-terminal section; belongs to the methyltransferase superfamily. tRNA (mnm(5)s(2)U34)-methyltransferase family. The protein in the C-terminal section; belongs to the DAO family. Requires FAD as cofactor.

It is found in the cytoplasm. The catalysed reaction is 5-aminomethyl-2-thiouridine(34) in tRNA + S-adenosyl-L-methionine = 5-methylaminomethyl-2-thiouridine(34) in tRNA + S-adenosyl-L-homocysteine + H(+). Functionally, catalyzes the last two steps in the biosynthesis of 5-methylaminomethyl-2-thiouridine (mnm(5)s(2)U) at the wobble position (U34) in tRNA. Catalyzes the FAD-dependent demodification of cmnm(5)s(2)U34 to nm(5)s(2)U34, followed by the transfer of a methyl group from S-adenosyl-L-methionine to nm(5)s(2)U34, to form mnm(5)s(2)U34. This is tRNA 5-methylaminomethyl-2-thiouridine biosynthesis bifunctional protein MnmC from Pseudomonas putida (strain GB-1).